The sequence spans 286 residues: Aminoglycoside N(3)-acetyltransferase III (286 aa).

The protein belongs to the antibiotic N-acetyltransferase family.

The enzyme catalyses a 2-deoxystreptamine antibiotic + acetyl-CoA = an N(3)-acetyl-2-deoxystreptamine antibiotic + CoA + H(+). Its function is as follows. Resistance to antibiotics containing the 2-deoxy-streptamine ring including gentamicin, kanamycin, tobramycin, neomycin and apramycin. This chain is Aminoglycoside N(3)-acetyltransferase III (aacC2), found in Acinetobacter baumannii.